Reading from the N-terminus, the 659-residue chain is Beta-galactosidase BgaA (659 aa).

Arg103 provides a ligand contact to substrate. Cys107 provides a ligand contact to Zn(2+). Asn141 serves as a coordination point for substrate. Glu142 functions as the Proton donor in the catalytic mechanism. 3 residues coordinate Zn(2+): Cys148, Cys150, and Cys153. Catalysis depends on Glu298, which acts as the Nucleophile. Trp307 provides a ligand contact to substrate.

The protein belongs to the glycosyl hydrolase 42 family. As to quaternary structure, dimer.

The catalysed reaction is Hydrolysis of terminal non-reducing beta-D-galactose residues in beta-D-galactosides.. Inhibited by Cu(2+), Hg(2+) and Zn(2+). No effect with Ca(2+), Mg(2+), Mn(2+) or excess EDTA (10 mM). Functionally, involved in plant cell wall degradation in cooperation with cellulosome. Hydrolyzes both p-nitrophenyl-alpha-L-arabinopyranoside (pNPAp) and p-nitrophenyl-beta-D-galactopyranoside (pNPGp), with higher activity for pNPAp. Shows hydrolysis activity against p-nitrophenyl-beta-D-fucopyranoside (pNPFp), but not against p-nitrophenyl-alpha-L-arabinofuranoside (pNPAf), o-nitrophenyl-beta-D-galactopyranoside (oNPGp), p-nitrophenyl-beta-D-xylopyranoside (pNPXp), p-nitrophenyl-beta-D-glucopyranoside (pNPGLp), p-nitrophenyl-beta-D-cellobiopyranoside (pNPCp), p-nitrophenyl-beta-lactopyranoside (pNPLp) or p-nitrophenyl-alpha-galactopyranoside (pNPalphaGp). No detectable activity against arabinan or arabinoxylan, but activity against arabinogalactan can be detected. Increases degradation activity of alpha-L-arabinofuranosidase (ArfA) and endo-1,4-beta-xylanase (XynA) when corn fiber gum and corn stem powder are used as substrates. The chain is Beta-galactosidase BgaA (bgaA) from Clostridium cellulovorans (strain ATCC 35296 / DSM 3052 / OCM 3 / 743B).